A 345-amino-acid polypeptide reads, in one-letter code: sn-glycerol-3-phosphate import ATP-binding protein UgpC (345 aa).

The 232-residue stretch at 4–235 folds into the ABC transporter domain; that stretch reads IQLLNIKKQY…PKTIFVADFI (232 aa). 37 to 44 lines the ATP pocket; it reads GPSGCGKS.

This sequence belongs to the ABC transporter superfamily. sn-glycerol-3-phosphate importer (TC 3.A.1.1.3) family. In terms of assembly, the complex is composed of two ATP-binding proteins (UgpC), two transmembrane proteins (UgpA and UgpE) and a solute-binding protein (UgpB).

The protein localises to the cell inner membrane. The enzyme catalyses sn-glycerol 3-phosphate(out) + ATP + H2O = sn-glycerol 3-phosphate(in) + ADP + phosphate + H(+). Part of the ABC transporter complex UgpBAEC involved in sn-glycerol-3-phosphate (G3P) import. Responsible for energy coupling to the transport system. The protein is sn-glycerol-3-phosphate import ATP-binding protein UgpC of Bartonella bacilliformis (strain ATCC 35685 / KC583 / Herrer 020/F12,63).